Reading from the N-terminus, the 236-residue chain is MPGAAAAAAAAAAAMLPAQEAAKLYHTNYVRNSRAIGVLWAIFTICFAIVNVVCFIQPYWIGDGVDTPQAGYFGLFHYCIGNGFSRELTCRGSFTDFSTLPSGAFKAASFFIGLSMMLIIACIICFTLFFFCNTATVYKICAWMQLTSAACLVLGCMIFPDGWDSDEVKRMCGEKTDKYTLGACSVRWAYILAIIGILDALILSFLAFVLGNRQDSLMAEELKAENKVLLSQYSLE.

4 consecutive transmembrane segments (helical) span residues 36-56 (IGVLWAIFTICFAIVNVVCFI), 110-130 (FFIGLSMMLIIACIICFTLFF), 140-160 (ICAWMQLTSAACLVLGCMIFP), and 191-211 (ILAIIGILDALILSFLAFVLG).

This sequence belongs to the LHFP family.

It localises to the membrane. The protein is LHFPL tetraspan subfamily member 3 protein of Homo sapiens (Human).